A 455-amino-acid chain; its full sequence is MHEIITLESLCQALADGEIAAAELRERALDTEARLARLNCFIREGDAVSQFGEADHAMKGTPLWGMPVSFKDNICVRGLPLTAGTRGMSGFVSDQDAAIVSQLRALGAVVAGKNNMHELSFGVTSINPHWGTVGNPVAPGYCAGGSSGGSAAAVASGIVPLSVGTDTGGSIRIPAAFCGITGFRPTTGRWSTAGIIPVSHTKDCVGLLTRTAGDAGFLYGLLSGKQQSFPLSRTAPCRIGLPVSMWSDLDGEVERACVNALSLLRKTGFEFIEIDDADIVELNQTLTFTVPLYEFFADLAQSLLSLGWKHGIHHIFAQVDDANVKGIINHHLGEGAIKPAHYLSSLQNGELLKRKMDELFARHNIELLGYPTVPCRVPHLDHADRPEFFSQAIRNTDLASNAMLPSITIPVGPEGRLPVGLSFDALRGRDALLLSRVSAIEQVLGFVRKVLPHTT.

Catalysis depends on charge relay system residues K71 and S146. The active-site Acyl-ester intermediate is S170.

It belongs to the amidase family.

Its pathway is plant hormone metabolism; auxin biosynthesis. Functionally, hydrolyzes indole-3-acetamide (IAM) into indole-3-acetic acid (IAA). This Pseudomonas savastanoi (Pseudomonas syringae pv. savastanoi) protein is Indoleacetamide hydrolase (iaaH).